The primary structure comprises 305 residues: UDP-3-O-acyl-N-acetylglucosamine deacetylase (305 aa).

Zn(2+) contacts are provided by H79, H238, and D242. The active-site Proton donor is the H265.

Belongs to the LpxC family. Requires Zn(2+) as cofactor.

It catalyses the reaction a UDP-3-O-[(3R)-3-hydroxyacyl]-N-acetyl-alpha-D-glucosamine + H2O = a UDP-3-O-[(3R)-3-hydroxyacyl]-alpha-D-glucosamine + acetate. It functions in the pathway glycolipid biosynthesis; lipid IV(A) biosynthesis; lipid IV(A) from (3R)-3-hydroxytetradecanoyl-[acyl-carrier-protein] and UDP-N-acetyl-alpha-D-glucosamine: step 2/6. Functionally, catalyzes the hydrolysis of UDP-3-O-myristoyl-N-acetylglucosamine to form UDP-3-O-myristoylglucosamine and acetate, the committed step in lipid A biosynthesis. This Salmonella paratyphi A (strain ATCC 9150 / SARB42) protein is UDP-3-O-acyl-N-acetylglucosamine deacetylase.